The primary structure comprises 258 residues: tRNA pseudouridine synthase A (258 aa).

Asp-54 (nucleophile) is an active-site residue. Residue Tyr-112 coordinates substrate.

It belongs to the tRNA pseudouridine synthase TruA family. As to quaternary structure, homodimer.

The catalysed reaction is uridine(38/39/40) in tRNA = pseudouridine(38/39/40) in tRNA. Its function is as follows. Formation of pseudouridine at positions 38, 39 and 40 in the anticodon stem and loop of transfer RNAs. This is tRNA pseudouridine synthase A from Geobacillus kaustophilus (strain HTA426).